A 526-amino-acid chain; its full sequence is Chaperonin GroEL 2 (526 aa).

The ATP site is built by lysine 50, glycine 413, and aspartate 494.

The protein belongs to the chaperonin (HSP60) family. Forms a cylinder of 14 subunits composed of two heptameric rings stacked back-to-back. Interacts with the co-chaperonin GroES.

It is found in the cytoplasm. The enzyme catalyses ATP + H2O + a folded polypeptide = ADP + phosphate + an unfolded polypeptide.. In terms of biological role, together with its co-chaperonin GroES, plays an essential role in assisting protein folding. The GroEL-GroES system forms a nano-cage that allows encapsulation of the non-native substrate proteins and provides a physical environment optimized to promote and accelerate protein folding. This chain is Chaperonin GroEL 2, found in Chlamydia pneumoniae (Chlamydophila pneumoniae).